The following is a 204-amino-acid chain: Tat proofreading chaperone DmsD (204 aa).

The protein belongs to the TorD/DmsD family. DmsD subfamily.

Its function is as follows. Required for biogenesis/assembly of DMSO reductase, but not for the interaction of the DmsA signal peptide with the Tat system. May be part of a chaperone cascade complex that facilitates a folding-maturation pathway for the substrate protein. The protein is Tat proofreading chaperone DmsD of Salmonella typhi.